The primary structure comprises 377 residues: MPSLVRRFQHASTEEQPFELNIQMESPPLVMYGNPDVSSGALASGLAKLTVFPADLKCESIVMEFVRIISTKRPLRDSCPDCKAQVEAFEKWEFSKEPTVYTHGTHTWPFTFIIPGHFPQTTNSPFINVTYILKTRVKIPSQPDFVFEYPLNLKRSIVTNADKIAQRLFPPTSLIALLELPPVIHPLSCVPVEFQLTGVKPENSKVGWRLTKISWRIEEQIKAQINGCSTHTGTKKPYIFKETRLLGNNEHKSGWKEDGDRIIFEIPISTSLLSKPICDVSFDGQFSLYIAHQLILETIVVEVMNSHPINSNARILRMKVNLPLTERGGLGVSWDEECPPMFNSVGPSPPAYEQVARSSPTDIPLPPPSCPTNVQRD.

The segment at 345–377 (VGPSPPAYEQVARSSPTDIPLPPPSCPTNVQRD) is disordered.

This is an uncharacterized protein from Schizosaccharomyces pombe (strain 972 / ATCC 24843) (Fission yeast).